The chain runs to 293 residues: 33 kDa chaperonin (293 aa).

Intrachain disulfides connect Cys236–Cys238 and Cys269–Cys272.

The protein belongs to the HSP33 family. In terms of processing, under oxidizing conditions two disulfide bonds are formed involving the reactive cysteines. Under reducing conditions zinc is bound to the reactive cysteines and the protein is inactive.

Its subcellular location is the cytoplasm. Functionally, redox regulated molecular chaperone. Protects both thermally unfolding and oxidatively damaged proteins from irreversible aggregation. Plays an important role in the bacterial defense system toward oxidative stress. The sequence is that of 33 kDa chaperonin from Lactobacillus delbrueckii subsp. bulgaricus (strain ATCC 11842 / DSM 20081 / BCRC 10696 / JCM 1002 / NBRC 13953 / NCIMB 11778 / NCTC 12712 / WDCM 00102 / Lb 14).